A 530-amino-acid chain; its full sequence is Ubiquitin carboxyl-terminal hydrolase 17-like protein 19 (530 aa).

Residues 80–375 (AGLQNMGNTC…QAYVLFYIQK (296 aa)) form the USP domain. The active-site Nucleophile is Cys89. His334 functions as the Proton acceptor in the catalytic mechanism. Basic and acidic residues-rich tracts occupy residues 382–392 (SESVSRGREPR) and 398–413 (DTDR…RDHP). 2 disordered regions span residues 382–413 (SESV…RDHP) and 476–530 (KNHH…LVCQ). Residues 484–495 (SSLLKLSSTTPT) are compositionally biased toward low complexity. A compositionally biased stretch (polar residues) spans 496–505 (HQESMNTGTL). A compositionally biased stretch (basic residues) spans 510–524 (GRARRSKGKNKHSKR).

Belongs to the peptidase C19 family. USP17 subfamily.

It localises to the nucleus. Its subcellular location is the endoplasmic reticulum. The catalysed reaction is Thiol-dependent hydrolysis of ester, thioester, amide, peptide and isopeptide bonds formed by the C-terminal Gly of ubiquitin (a 76-residue protein attached to proteins as an intracellular targeting signal).. Functionally, deubiquitinating enzyme that removes conjugated ubiquitin from specific proteins to regulate different cellular processes that may include cell proliferation, progression through the cell cycle, apoptosis, cell migration, and the cellular response to viral infection. In Homo sapiens (Human), this protein is Ubiquitin carboxyl-terminal hydrolase 17-like protein 19 (USP17L19).